The sequence spans 808 residues: Protein SEY1 (808 aa).

The segment at 1–21 (MSSELSEGELSHTSSSSSFVP) is disordered. At 1–701 (MSSELSEGEL…KRSIVQHITQ (701 aa)) the chain is on the cytoplasmic side. A GB1/RHD3-type G domain is found at 57–286 (GNNYHIISVF…VGDELFKPEY (230 aa)). Residue 67 to 74 (GSQSTGKS) participates in GTP binding. Residues 702–722 (IPYYIYLVIVFLGWNEFMAII) form a helical membrane-spanning segment. Residues 723-725 (RNP) are Lumenal-facing. Residues 726–746 (LLFSLALLLGASVYILYKLNL) form a helical membrane-spanning segment. The Cytoplasmic portion of the chain corresponds to 747–808 (LKPAIVVAQR…YSDNIELDDM (62 aa)).

This sequence belongs to the TRAFAC class dynamin-like GTPase superfamily. GB1/RHD3 GTPase family. RHD3 subfamily.

The protein localises to the endoplasmic reticulum membrane. Its function is as follows. Cooperates with the reticulon proteins and tubule-shaping DP1 family proteins to generate and maintain the structure of the tubular endoplasmic reticulum network. Has GTPase activity, which is required for its function in ER organization. This is Protein SEY1 from Candida tropicalis (strain ATCC MYA-3404 / T1) (Yeast).